The sequence spans 76 residues: Brevinin-2ISa (76 aa).

The signal sequence occupies residues 1-22; the sequence is MFNMKKSLLLLFFLGTISLSLC. A propeptide spans 23–41 (removed in mature form); the sequence is EEERDADEDDGVEMTEEEV. An intrachain disulfide couples Cys-70 to Cys-76.

As to expression, expressed by the skin glands.

It localises to the secreted. In terms of biological role, has antimicrobial activity against Gram-negative bacterium E.coli ATCC 8739 (MIC=50 ug), against Gram positive bacteria S.aureus ATCC 6538 (MIC=12.5 ug), methicillin-resistant S.aureus ATCC 43300 (MIC=100 ug) and B.subtilis ATCC 6633 (MIC=12.5 ug). Has no activity against fungus C.albicans ATCC 90028. The protein is Brevinin-2ISa of Odorrana ishikawae (Ishikawa's frog).